Here is a 262-residue protein sequence, read N- to C-terminus: G patch domain-containing protein 11 (262 aa).

Basic and acidic residues-rich tracts occupy residues 39 to 61 (LHKE…ESRE), 114 to 127 (EEVK…ELQN), and 136 to 165 (QHLE…DLRK). 2 disordered regions span residues 39-71 (LHKE…IGSQ) and 88-169 (GLGK…SQRA). Positions 41 to 62 (KEKDIQNRQKSFKEQEKESREA) form a coiled coil. In terms of domain architecture, G-patch spans 70–116 (SQNKGFALLQKMGYKAGQGLGKEGAGRVEPVPLNIKTDRGGIGMEEV).

This sequence belongs to the GPATCH11 family.

Its subcellular location is the chromosome. It localises to the centromere. The protein localises to the kinetochore. In Danio rerio (Zebrafish), this protein is G patch domain-containing protein 11 (gpatch11).